The sequence spans 60 residues: uncharacterized protein (60 aa).

This is an uncharacterized protein from Saccharomyces cerevisiae (strain ATCC 204508 / S288c) (Baker's yeast).